The primary structure comprises 228 residues: Histidine/lysine/arginine/ornithine transport system permease protein HisQ (228 aa).

The Periplasmic segment spans residues Met-1 to Gly-12. Residues Ala-13–Ile-33 traverse the membrane as a helical segment. The ABC transmembrane type-1 domain maps to Ala-13 to Leu-212. At Gly-34–Gly-58 the chain is on the cytoplasmic side. The chain crosses the membrane as a helical span at residues Val-59–Val-79. Over Thr-80 to Gln-87 the chain is Periplasmic. Residues Ile-88 to Phe-108 form a helical membrane-spanning segment. The Cytoplasmic portion of the chain corresponds to Thr-109–Arg-148. The helical transmembrane segment at Tyr-149–Leu-171 threads the bilayer. At Gly-172–Ala-194 the chain is on the periplasmic side. Residues Ile-195 to Leu-215 form a helical membrane-spanning segment. Over Glu-216–Leu-228 the chain is Cytoplasmic.

Belongs to the binding-protein-dependent transport system permease family. HisMQ subfamily. The HisPMQJ complex is composed of two ATP-binding proteins (HisP), two transmembrane proteins (HisM and HisQ) and a solute-binding protein (HisJ). The HisPMQ-ArgT complex is composed of two ATP-binding proteins (HisP), two transmembrane proteins (HisM and HisQ) and a solute-binding protein (ArgT).

The protein localises to the cell inner membrane. Functionally, part of the ABC transporter complex HisPMQJ involved in histidine transport. Is also part of the ABC transporter complex HisPMQ-ArgT involved in lysine/arginine/ornithine transport. Probably responsible for the translocation of the substrate across the membrane. The chain is Histidine/lysine/arginine/ornithine transport system permease protein HisQ (hisQ) from Escherichia coli (strain K12).